Reading from the N-terminus, the 440-residue chain is Chromosome partition protein MukF (440 aa).

The tract at residues 208–236 is leucine-zipper; the sequence is LSETSGTLRELQDTLEAAGDKLQANLLRI.

It belongs to the MukF family. Interacts, and probably forms a ternary complex, with MukE and MukB via its C-terminal region. The complex formation is stimulated by calcium or magnesium. It is required for an interaction between MukE and MukB.

The protein resides in the cytoplasm. The protein localises to the nucleoid. Functionally, involved in chromosome condensation, segregation and cell cycle progression. May participate in facilitating chromosome segregation by condensation DNA from both sides of a centrally located replisome during cell division. Not required for mini-F plasmid partitioning. Probably acts via its interaction with MukB and MukE. Overexpression results in anucleate cells. It has a calcium binding activity. The sequence is that of Chromosome partition protein MukF from Shigella boydii serotype 4 (strain Sb227).